The sequence spans 100 residues: Large ribosomal subunit protein bL28 (100 aa).

The segment at 1-25 (MTRRCDITGKSVLSGNNVSHANNKS) is disordered. Residues 11–22 (SVLSGNNVSHAN) are compositionally biased toward polar residues.

It belongs to the bacterial ribosomal protein bL28 family.

This chain is Large ribosomal subunit protein bL28, found in Acidiphilium cryptum (strain JF-5).